We begin with the raw amino-acid sequence, 561 residues long: Asparagine synthetase [glutamine-hydrolyzing] (561 aa).

Cys-2 (for GATase activity) is an active-site residue. A Glutamine amidotransferase type-2 domain is found at 2–191 (CGIWALFGSD…PGHYEVLDLK (190 aa)). Residues 49–53 (RLAVV), 75–77 (NGE), and Asp-97 contribute to the L-glutamine site. Residues 213-536 (HALYDSVEKL…PGRADWLTHY (324 aa)) enclose the Asparagine synthetase domain. ATP is bound by residues Leu-256, Ile-288, and 363-364 (SG). At Lys-385 the chain carries N6-acetyllysine. Thr-545 carries the post-translational modification Phosphothreonine. Position 557 is a phosphoserine (Ser-557).

The catalysed reaction is L-aspartate + L-glutamine + ATP + H2O = L-asparagine + L-glutamate + AMP + diphosphate + H(+). Its pathway is amino-acid biosynthesis; L-asparagine biosynthesis; L-asparagine from L-aspartate (L-Gln route): step 1/1. The chain is Asparagine synthetase [glutamine-hydrolyzing] (ASNS) from Mesocricetus auratus (Golden hamster).